The following is a 200-amino-acid chain: Small ribosomal subunit protein uS4 (200 aa).

The disordered stretch occupies residues 22–43 (TGKELERRPYAPGQHGPTQRKK). In terms of domain architecture, S4 RNA-binding spans 92–170 (QRLDNIVYRL…VPEYVTFDAE (79 aa)).

The protein belongs to the universal ribosomal protein uS4 family. Part of the 30S ribosomal subunit. Contacts protein S5. The interaction surface between S4 and S5 is involved in control of translational fidelity.

Functionally, one of the primary rRNA binding proteins, it binds directly to 16S rRNA where it nucleates assembly of the body of the 30S subunit. Its function is as follows. With S5 and S12 plays an important role in translational accuracy. This chain is Small ribosomal subunit protein uS4, found in Listeria monocytogenes serovar 1/2a (strain ATCC BAA-679 / EGD-e).